The primary structure comprises 352 residues: tRNA pseudouridine synthase D (352 aa).

Asp78 (nucleophile) is an active-site residue. The 147-residue stretch at 153-299 folds into the TRUD domain; that stretch reads GVPNYYGEQR…LDQDRRPLLL (147 aa).

The protein belongs to the pseudouridine synthase TruD family.

The enzyme catalyses uridine(13) in tRNA = pseudouridine(13) in tRNA. In terms of biological role, responsible for synthesis of pseudouridine from uracil-13 in transfer RNAs. In Aeromonas hydrophila subsp. hydrophila (strain ATCC 7966 / DSM 30187 / BCRC 13018 / CCUG 14551 / JCM 1027 / KCTC 2358 / NCIMB 9240 / NCTC 8049), this protein is tRNA pseudouridine synthase D.